Here is a 1102-residue protein sequence, read N- to C-terminus: Phosphatidylinositol 4,5-bisphosphate 3-kinase catalytic subunit gamma isoform (1102 aa).

The region spanning S34–H141 is the PI3K-ABD domain. Residues N217–T309 form the PI3K-RBD domain. The region spanning C357–D521 is the C2 PI3K-type domain. In terms of domain architecture, PIK helical spans D541–G723. Residues V797–W1080 enclose the PI3K/PI4K catalytic domain. The tract at residues V803 to K809 is G-loop. ATP-binding positions include G829–L838 and L864–T872. Residues G943–N951 are catalytic loop. F961–L969 contacts ATP. The segment at H962–T988 is activation loop. At T1024 the chain carries Phosphothreonine; by PKA. S1101 bears the Phosphoserine; by autocatalysis mark.

It belongs to the PI3/PI4-kinase family. As to quaternary structure, heterodimer of a catalytic subunit PIK3CG and a PIK3R5 or PIK3R6 regulatory subunit. Interacts with GRK2 through the PIK helical domain. Interaction with GRK2 is required for targeting to agonist-occupied receptor. Interacts with PDE3B; regulates PDE3B activity and thereby cAMP levels in cells. Interacts with TPM2. Interacts with EPHA8; regulates integrin-mediated cell adhesion to substrate. Interacts with HRAS; the interaction is required for membrane recruitment and beta-gamma G protein dimer-dependent activation of the PI3K gamma complex PIK3CG:PIK3R6. Autophosphorylation at Ser-1101 has no effect on the phosphatidylinositol-4,5-bisphosphate 3-kinase activity.

The protein resides in the cytoplasm. It is found in the cell membrane. The catalysed reaction is a 1,2-diacyl-sn-glycero-3-phospho-(1D-myo-inositol-4,5-bisphosphate) + ATP = a 1,2-diacyl-sn-glycero-3-phospho-(1D-myo-inositol-3,4,5-trisphosphate) + ADP + H(+). The enzyme catalyses a 1,2-diacyl-sn-glycero-3-phospho-(1D-myo-inositol) + ATP = a 1,2-diacyl-sn-glycero-3-phospho-(1D-myo-inositol-3-phosphate) + ADP + H(+). It carries out the reaction a 1,2-diacyl-sn-glycero-3-phospho-(1D-myo-inositol 4-phosphate) + ATP = a 1,2-diacyl-sn-glycero-3-phospho-(1D-myo-inositol-3,4-bisphosphate) + ADP + H(+). It catalyses the reaction L-seryl-[protein] + ATP = O-phospho-L-seryl-[protein] + ADP + H(+). Its pathway is phospholipid metabolism; phosphatidylinositol phosphate biosynthesis. Activated by both the alpha and the beta-gamma G proteins following stimulation of G protein-coupled receptors (GPCRs). Activation by GPCRs is assisted by the regulatory subunits (PIK3R5 or PIK3R6) leading to the translocation from the cytosol to the plasma membrane and to kinase activation. When bound to PIK3R5 the PI3K activity of PIK3CG could be activated greater than 100-fold by the beta-gamma G proteins. Functionally, phosphoinositide-3-kinase (PI3K) that phosphorylates PtdIns(4,5)P2 (Phosphatidylinositol 4,5-bisphosphate) to generate phosphatidylinositol 3,4,5-trisphosphate (PIP3). PIP3 plays a key role by recruiting PH domain-containing proteins to the membrane, including AKT1 and PDPK1, activating signaling cascades involved in cell growth, survival, proliferation, motility and morphology. Links G-protein coupled receptor activation to PIP3 production. Involved in immune, inflammatory and allergic responses. Modulates leukocyte chemotaxis to inflammatory sites and in response to chemoattractant agents. May control leukocyte polarization and migration by regulating the spatial accumulation of PIP3 and by regulating the organization of F-actin formation and integrin-based adhesion at the leading edge. Controls motility of dendritic cells. Participates in T-lymphocyte migration. Regulates T-lymphocyte proliferation and cytokine production. Required for B-lymphocyte development and signaling. Together with other PI3Ks are involved in the oxidative burst produced by neutrophils in response to chemotactic agents. Together with PIK3CD regulate neutrophil extravasation. Together with PIK3CB promotes platelet aggregation and thrombosis. Regulates alpha-IIb/beta-3 integrins (ITGA2B/ ITGB3) adhesive function in platelets downstream of P2Y12 through a lipid kinase activity-independent mechanism. May have also a lipid kinase activity-dependent function in platelet aggregation. Involved in endothelial progenitor cell migration. Negative regulator of cardiac contractility. Modulates cardiac contractility by anchoring protein kinase A (PKA) and PDE3B activation, reducing cAMP levels. Regulates cardiac contractility also by promoting beta-adrenergic receptor internalization by binding to GRK2 and by non-muscle tropomyosin phosphorylation. Also has serine/threonine protein kinase activity: both lipid and protein kinase activities are required for beta-adrenergic receptor endocytosis. May also have a scaffolding role in modulating cardiac contractility. Contribute to cardiac hypertrophy under pathological stress. Through simultaneous binding of PDE3B to RAPGEF3 and PIK3R6 is assembled in a signaling complex in which the PI3K gamma complex is activated by RAPGEF3 and which is involved in angiogenesis. In neutrophils, participates in a phospholipase C-activating N-formyl peptide-activated GPCR (G protein-coupled receptor) signaling pathway downstream of RASGRP4-mediated Ras-activation, to promote neutrophil functional responses. The polypeptide is Phosphatidylinositol 4,5-bisphosphate 3-kinase catalytic subunit gamma isoform (PIK3CG) (Sus scrofa (Pig)).